Consider the following 494-residue polypeptide: MHASCCCAPPESVSHTRRISYKYSGTSYPTRTTTTSSSAPEFTNKKQSTAMAPTTAAAAASSNGGGESDGSSKEWRLTAPTRGGAMAAAGDKMSIRAVRYKISASVDDRGPRPVLPLAHGDPSVFPEFRTAAEAEDAVADALRSGDFNCYPAGVGLPAARRAVADHLSRDLPYKLSSDDIFLTAGGTQAIEVVISILAQPGTNILLPRPGYPNYEARAAFNNLEVRHFDLIPEKGWEIDLNSLESIADKNTTAIVIINPNNPCGNVYTYEHLSKVAEVARKLGILVITDEVYGNLVFGSSPFVPMGCFGHIVPILTIGSLSKRWIVPGWRLGWVAICDPKKTLQETKIATLITNFLNVSTDPATFIQGALPNILKNTKEEFFKRIIDLLTETSDICYRGIKDIKCITCPHKPEGSMFVMVKLNLYLLEGIHDDVDFCCQLAKEESVILCPGSVLGMKNWVRITFAIDSSSLLDGLERIKSFCQRHKKKNPLNYI.

Composition is skewed to low complexity over residues 24 to 38 and 48 to 62; these read SGTS…TSSS and STAM…AASS. Residues 24 to 76 are disordered; that stretch reads SGTSYPTRTTTTSSSAPEFTNKKQSTAMAPTTAAAAASSNGGGESDGSSKEWR. Lys322 bears the N6-(pyridoxal phosphate)lysine mark.

The protein belongs to the class-I pyridoxal-phosphate-dependent aminotransferase family. The cofactor is pyridoxal 5'-phosphate. As to expression, expressed in companion and pericycle cells adjacent to the protoxylem of roots. Expressed in companion cells of shoots.

The catalysed reaction is nicotianamine + 2-oxoglutarate = 3''-deamino-3''-oxonicotianamine + L-glutamate. In terms of biological role, involved in biosynthesis of mugineic acid family phytosiderophores, which are ferric iron chelators produced in graminaceous plants in response to iron deficiency. The chain is Nicotianamine aminotransferase 1 from Oryza sativa subsp. japonica (Rice).